The chain runs to 832 residues: Disintegrin and metalloproteinase domain-containing protein 23 (832 aa).

Residues methionine 1–glutamine 10 show a composition bias toward polar residues. Positions methionine 1 to alanine 37 are disordered. The N-terminal stretch at methionine 1–serine 59 is a signal peptide. Positions glycine 28–alanine 37 are enriched in low complexity. The propeptide occupies serine 60 to arginine 286. N-linked (GlcNAc...) asparagine glycosylation is found at asparagine 76, asparagine 96, asparagine 100, and asparagine 263. The Extracellular portion of the chain corresponds to alanine 287–asparagine 792. The Peptidase M12B domain occupies lysine 299–proline 496. 3 cysteine pairs are disulfide-bonded: cysteine 408-cysteine 491, cysteine 450-cysteine 475, and cysteine 452-cysteine 459. The 87-residue stretch at proline 502 to aspartate 588 folds into the Disintegrin domain. Asparagine 547 and asparagine 548 each carry an N-linked (GlcNAc...) asparagine glycan. An intrachain disulfide couples cysteine 560 to cysteine 580. The may bind the integrin receptor stretch occupies residues alanine 563–aspartate 568. Asparagine 664 and asparagine 732 each carry an N-linked (GlcNAc...) asparagine glycan. The 38-residue stretch at asparagine 732–serine 769 folds into the EGF-like domain. Disulfide bonds link cysteine 736/cysteine 751, cysteine 745/cysteine 757, and cysteine 759/cysteine 768. A helical transmembrane segment spans residues leucine 793–glycine 813. The Cytoplasmic portion of the chain corresponds to tryptophan 814–isoleucine 832.

As to quaternary structure, can bind to LGI1 and LGI4. Ligand for integrin alpha-V/beta-3. Highly expressed in the brain and weakly expressed in the heart. In the brain, expressed prominently in the amygdala, caudate nucleus, hypothalamus, thalamus, cerebral cortex and occipital pole.

The protein localises to the cell membrane. It is found in the secreted. In terms of biological role, may play a role in cell-cell and cell-matrix interactions. This is a non-catalytic metalloprotease-like protein. This chain is Disintegrin and metalloproteinase domain-containing protein 23 (ADAM23), found in Homo sapiens (Human).